The primary structure comprises 320 residues: 1-aminocyclopropane-1-carboxylate oxidase (320 aa).

A Fe2OG dioxygenase domain is found at 156–256; sequence PTFGTKVSNY…RMSIASFYNP (101 aa). Residues histidine 180, aspartate 182, and histidine 237 each contribute to the Fe cation site.

This sequence belongs to the iron/ascorbate-dependent oxidoreductase family. Fe cation serves as cofactor.

The enzyme catalyses 1-aminocyclopropane-1-carboxylate + L-ascorbate + O2 = ethene + L-dehydroascorbate + hydrogen cyanide + CO2 + 2 H2O. The protein operates within alkene biosynthesis; ethylene biosynthesis via S-adenosyl-L-methionine; ethylene from S-adenosyl-L-methionine: step 2/2. This is 1-aminocyclopropane-1-carboxylate oxidase (ACO) from Brassica juncea (Indian mustard).